A 385-amino-acid chain; its full sequence is uncharacterized protein (385 aa).

The Zn(2+) site is built by D180, H258, and H275.

It belongs to the iron-containing alcohol dehydrogenase family. It depends on Zn(2+) as a cofactor.

This is an uncharacterized protein from Synechocystis sp. (strain ATCC 27184 / PCC 6803 / Kazusa).